The following is a 484-amino-acid chain: Pyruvate kinase (484 aa).

Substrate is bound at residue R33. Residues N35, S37, D67, and T68 each contribute to the K(+) site. Position 35–38 (35–38 (NFSH)) interacts with ATP. Positions 74 and 155 each coordinate ATP. E221 is a binding site for Mg(2+). Positions 244, 245, and 277 each coordinate substrate. D245 is a binding site for Mg(2+).

Belongs to the pyruvate kinase family. Homotetramer. It depends on Mg(2+) as a cofactor. K(+) serves as cofactor.

It carries out the reaction pyruvate + ATP = phosphoenolpyruvate + ADP + H(+). The protein operates within carbohydrate degradation; glycolysis; pyruvate from D-glyceraldehyde 3-phosphate: step 5/5. The polypeptide is Pyruvate kinase (pyk) (Chlamydia pneumoniae (Chlamydophila pneumoniae)).